We begin with the raw amino-acid sequence, 485 residues long: Glycogen synthase (485 aa).

An ADP-alpha-D-glucose-binding site is contributed by Lys-21.

This sequence belongs to the glycosyltransferase 1 family. Bacterial/plant glycogen synthase subfamily.

The catalysed reaction is [(1-&gt;4)-alpha-D-glucosyl](n) + ADP-alpha-D-glucose = [(1-&gt;4)-alpha-D-glucosyl](n+1) + ADP + H(+). The protein operates within glycan biosynthesis; glycogen biosynthesis. Synthesizes alpha-1,4-glucan chains using ADP-glucose. This is Glycogen synthase from Pseudomonas syringae pv. syringae (strain B728a).